A 249-amino-acid polypeptide reads, in one-letter code: Large ribosomal subunit protein uL4 (249 aa).

This sequence belongs to the universal ribosomal protein uL4 family. As to quaternary structure, part of the 50S ribosomal subunit.

Functionally, one of the primary rRNA binding proteins, this protein initially binds near the 5'-end of the 23S rRNA. It is important during the early stages of 50S assembly. It makes multiple contacts with different domains of the 23S rRNA in the assembled 50S subunit and ribosome. Forms part of the polypeptide exit tunnel. This is Large ribosomal subunit protein uL4 from Methanospirillum hungatei JF-1 (strain ATCC 27890 / DSM 864 / NBRC 100397 / JF-1).